The sequence spans 291 residues: Protease HtpX (291 aa).

Transmembrane regions (helical) follow at residues 4 to 24 (IALF…VLNI) and 36 to 56 (LSGL…ISLM). Position 143 (His143) interacts with Zn(2+). The active site involves Glu144. His147 lines the Zn(2+) pocket. The next 2 membrane-spanning stretches (helical) occupy residues 151-171 (GDMI…IFLS) and 199-219 (FIVS…LTMW). Glu225 contributes to the Zn(2+) binding site.

This sequence belongs to the peptidase M48B family. The cofactor is Zn(2+).

It is found in the cell inner membrane. The protein is Protease HtpX of Aliivibrio fischeri (strain MJ11) (Vibrio fischeri).